The following is an 871-amino-acid chain: uncharacterized protein (871 aa).

Helical transmembrane passes span 11-31, 92-112, 139-159, 380-400, 422-442, 475-495, 520-540, 562-582, 586-606, 629-649, and 653-673; these read AFVSSLVFNFAIFCAFIGLFL, YLFTFGALCILGCLVLFPILL, FYAHVFLSWLFFGFTIFIIYR, TILTLMIIFWAFPVAVVGCIS, LLGIITGILPSVALSILMSLV, VQVFLVTTMTSAATSAVVQVI, FLLQGLSIPGGALLQIVTLLL, LSAPSWGTVYPVYSLLVTIMI, IIAPIIIGFAAVAFVLIYFAY, LFQVFVGLYLAEVCLIGLFVL, and WGATVLEAVFLGFTVACHLYF. 6 positions are modified to phosphoserine: S725, S726, S727, S729, S737, and S761. Over residues 727–740 the composition is skewed to polar residues; it reads SGSDEFLETSSRTS. Positions 727–746 are disordered; sequence SGSDEFLETSSRTSENTKEK.

This sequence belongs to the CSC1 (TC 1.A.17) family.

It is found in the golgi apparatus membrane. Its function is as follows. Acts as an osmosensitive calcium-permeable cation channel. This is an uncharacterized protein from Schizosaccharomyces pombe (strain 972 / ATCC 24843) (Fission yeast).